The primary structure comprises 331 residues: Benzylsuccinate synthase activating enzyme (331 aa).

Residues 15–315 enclose the Radical SAM core domain; it reads QDGPGIRTTI…VTIGGIVGIA (301 aa). Residues C29, C33, C36, C55, C58, C61, C65, C89, C92, C95, and C99 each coordinate [4Fe-4S] cluster. S-adenosyl-L-methionine is bound at residue 35–37; that stretch reads WCH. 2 consecutive 4Fe-4S ferredoxin-type domains span residues 46–75 and 80–109; these read QEFY…LVRN and TIVQ…IVGQ. S-adenosyl-L-methionine is bound by residues G139, 189–191, and H263; that span reads DLK.

Belongs to the organic radical-activating enzymes family. It depends on [4Fe-4S] cluster as a cofactor.

It catalyses the reaction glycyl-[protein] + reduced [flavodoxin] + S-adenosyl-L-methionine = glycin-2-yl radical-[protein] + semiquinone [flavodoxin] + 5'-deoxyadenosine + L-methionine + H(+). The protein operates within xenobiotic degradation; toluene degradation [regulation]. In terms of biological role, activation of benzylsuccinate synthase under anaerobic conditions by generation of an organic free radical, using S-adenosylmethionine and reduced flavodoxin as cosubstrates to produce 5'-deoxy-adenosine. This is Benzylsuccinate synthase activating enzyme (bssD) from Thauera aromatica.